Reading from the N-terminus, the 419-residue chain is Cytosine permease (419 aa).

Residues 1–19 (MSQDNNFSQGPVPQSARKG) are Cytoplasmic-facing. Residues 20-39 (VLALTFVMLGLTFFSASMWT) traverse the membrane as a helical segment. Residues 40-51 (GGTLGTGLSYHD) are Periplasmic-facing. The helical transmembrane segment at 52–71 (FFLAVLIGNLLLGIYTSFLG) threads the bilayer. The Cytoplasmic segment spans residues 72 to 100 (YIGAKTGLTTHLLARFSFGVKGSWLPSLL). The helical transmembrane segment at 101–120 (LGGTQVGWFGVGVAMFAIPV) threads the bilayer. The Periplasmic portion of the chain corresponds to 121-127 (GKATGLD). A helical transmembrane segment spans residues 128–147 (INLLIAVSGLLMTVTVFFGI). Residues 148-152 (SALTV) lie on the Cytoplasmic side of the membrane. Residues 153 to 172 (LSVIAVPAIACLGGYSVWLA) form a helical membrane-spanning segment. The Periplasmic portion of the chain corresponds to 173-192 (VNGMGGLDALKAVVPAQPLD). The helical transmembrane segment at 193–212 (FNVALALVVGSFISAGTLTA) threads the bilayer. Topologically, residues 213 to 221 (DFVRFGRNA) are cytoplasmic. A helical transmembrane segment spans residues 222-242 (KLAVLVAMVAFFLGNSLMFIF). Residues 243 to 257 (GAAGAAALGMADISD) lie on the Periplasmic side of the membrane. Residues 258–277 (VMIAQGLLLPAIVVLGLNIW) form a helical membrane-spanning segment. Topologically, residues 278-300 (TTNDNALYASGLGFANITGMSSK) are cytoplasmic. Residues 301-320 (TLSVINGIIGTVCALWLYNN) traverse the membrane as a helical segment. Residue Phe321 is a topological domain, periplasmic. Residues 322 to 341 (VGWLTFLSAAIPPVGGVIIA) form a helical membrane-spanning segment. Residues 342 to 358 (DYLMNRRRYEHFATTRM) are Cytoplasmic-facing. The helical transmembrane segment at 359–378 (MSVNWVAILAVALGIAAGHW) threads the bilayer. Over 379–380 (LP) the chain is Periplasmic. A helical transmembrane segment spans residues 381–400 (GIVPVNAVLGGALSYLILNP). Over 401-419 (ILNRKTTAAMTHVEANSVE) the chain is Cytoplasmic.

The protein belongs to the purine-cytosine permease (2.A.39) family.

Its subcellular location is the cell inner membrane. Its function is as follows. Required for cytosine transport into the cell. This Escherichia coli O6:H1 (strain CFT073 / ATCC 700928 / UPEC) protein is Cytosine permease (codB).